The following is a 272-amino-acid chain: MKRIALLGCGSMGTQIALAIDSENFPATLTHVYDESKDASFSLTQKLKNKPEIVENSHLLSSQPIDIVVEAASQNAVKDVALSVIQNKKDLMIMSVGALLDESIYDILSDACNDFKKTIYLPSGAIAGLDGLKSVKDELESISITTTKHPRSLKGAKFFETSDINLDEITSSTVVYKGTAKEAVTLFPANINVAALLSLTGIGSEKTSVTIVADPNTDKNTHHIEASGKFGTMTFTIENVPDSNNPKTSRLAILSAIETLKKYCSDDIQIGT.

Positions 125 and 192 each coordinate NAD(+). H222 is a catalytic residue.

It belongs to the L-aspartate dehydrogenase family.

The catalysed reaction is L-aspartate + NADP(+) + H2O = oxaloacetate + NH4(+) + NADPH + H(+). It carries out the reaction L-aspartate + NAD(+) + H2O = oxaloacetate + NH4(+) + NADH + H(+). Its pathway is cofactor biosynthesis; NAD(+) biosynthesis; iminoaspartate from L-aspartate (dehydrogenase route): step 1/1. Specifically catalyzes the NAD or NADP-dependent dehydrogenation of L-aspartate to iminoaspartate. In Nitrosopumilus maritimus (strain SCM1), this protein is L-aspartate dehydrogenase.